We begin with the raw amino-acid sequence, 185 residues long: Pycsar effector protein EcPycTM (185 aa).

3 helical membrane-spanning segments follow: residues 32-52 (ALLL…VGYF), 63-83 (MVIF…SVLL), and 141-161 (FILS…VSWI).

The protein localises to the cell inner membrane. In terms of biological role, pycsar (pyrimidine cyclase system for antiphage resistance) provides immunity against bacteriophage. The pyrimidine cyclase (PycC) synthesizes cyclic nucleotides in response to infection; these serve as specific second messenger signals. The signals activate the adjacent effector, leading to bacterial cell death and abortive phage infection. A clade E Pycsar system. The effector component of a two-gene Pycsar system. Expression of this and adjacent cytidylate cyclase EcPycC (AC P0DV24) confers resistance to bacteriophage P1 and T5; this protein is required for resistance. When cells expressing the Pycsar system are infected by phage T5 at low multiplicity of infection (0.2 MOI) the culture survives, at 2.0 MOI bacteria enter growth arrest. The same cells enter growth arrest after exposure to 250 uM cCMP but not cUMP; this effector protein responds only to cCMP, usually produced by its cognate NTP cyclase. Some of the cells treated with cCMP have abnormal membrane protrusions, probably due to effects on membrane integrity. The sequence is that of Pycsar effector protein EcPycTM from Escherichia coli.